Reading from the N-terminus, the 274-residue chain is 2,3,4,5-tetrahydropyridine-2,6-dicarboxylate N-succinyltransferase (274 aa).

Substrate-binding residues include Arg104 and Asp141.

This sequence belongs to the transferase hexapeptide repeat family. Homotrimer.

The protein localises to the cytoplasm. The enzyme catalyses (S)-2,3,4,5-tetrahydrodipicolinate + succinyl-CoA + H2O = (S)-2-succinylamino-6-oxoheptanedioate + CoA. Its pathway is amino-acid biosynthesis; L-lysine biosynthesis via DAP pathway; LL-2,6-diaminopimelate from (S)-tetrahydrodipicolinate (succinylase route): step 1/3. The chain is 2,3,4,5-tetrahydropyridine-2,6-dicarboxylate N-succinyltransferase from Serratia proteamaculans (strain 568).